Reading from the N-terminus, the 475-residue chain is MSPQTETKAGVGFKAGVKEYKLTYYTPDYEPHDHDILAAFRVTPQPGGPPEEAGAAVAAESSTGTWTPVWTDGLTWFDRYKGRSYHIDAVPGGENPFIAYVAYPLDLFEEGSVANMFSSIVGNVFGFKALRALRLEDLRIPPAYTKTFQGPPHGIQVERDKLNKYGRPLLGCTIKPKLGLSAKNYGRAVYECLRGGLDFTKDDENVNSQPFMRWRDRFLFCAEALFKAQSETVEIKGHYSNATAGTCEEMIKRAVFADELGVPIVMHDYLTGGFTANTSLAHYCRDNGLLLHIHRAMHAVIDRQKNHGIHFRVLAKALRLSGGDHIHSGTVVGKLEGERDITLGFVDLLRDDFVEKDRSRGIYFTQPWVSLPGVIPVASGGIHVWHMPALTEIFGDDSVLQFGGGTLGTPWGNAPGAVANRVALEACVQARNEGRDLAREGNEIIRQAAKWSPELAAACEVWKEIEFEYEAVDTL.

A propeptide spanning residues 1–2 is cleaved from the precursor; sequence MS. Residue P3 is modified to N-acetylproline. K14 is subject to N6,N6,N6-trimethyllysine. 2 residues coordinate substrate: N123 and T173. K175 serves as the catalytic Proton acceptor. Residue K177 participates in substrate binding. Residues K201, D203, and E204 each coordinate Mg(2+). K201 carries the N6-carboxylysine modification. Residue H294 is the Proton acceptor of the active site. Substrate is bound by residues R295, H327, and S379.

The protein belongs to the RuBisCO large chain family. Type I subfamily. Heterohexadecamer of 8 large chains and 8 small chains; disulfide-linked. The disulfide link is formed within the large subunit homodimers. Requires Mg(2+) as cofactor. In terms of processing, the disulfide bond which can form in the large chain dimeric partners within the hexadecamer appears to be associated with oxidative stress and protein turnover.

It localises to the plastid. The protein resides in the chloroplast. It carries out the reaction 2 (2R)-3-phosphoglycerate + 2 H(+) = D-ribulose 1,5-bisphosphate + CO2 + H2O. The catalysed reaction is D-ribulose 1,5-bisphosphate + O2 = 2-phosphoglycolate + (2R)-3-phosphoglycerate + 2 H(+). Functionally, ruBisCO catalyzes two reactions: the carboxylation of D-ribulose 1,5-bisphosphate, the primary event in carbon dioxide fixation, as well as the oxidative fragmentation of the pentose substrate in the photorespiration process. Both reactions occur simultaneously and in competition at the same active site. This Plumbago auriculata (Cape leadwort) protein is Ribulose bisphosphate carboxylase large chain.